We begin with the raw amino-acid sequence, 717 residues long: Polyribonucleotide nucleotidyltransferase (717 aa).

Residues Asp-488 and Asp-494 each coordinate Mg(2+). Residues 555–614 (PRIEVMNIPVDKIREVIGSGGKVIREIVEKTGAKINIDDDGTVKIASASAKEIEAARKWI) form the KH domain. Positions 624–692 (GQVYEGTVVK…ERGKVRLSMK (69 aa)) constitute an S1 motif domain.

It belongs to the polyribonucleotide nucleotidyltransferase family. It depends on Mg(2+) as a cofactor.

It localises to the cytoplasm. It carries out the reaction RNA(n+1) + phosphate = RNA(n) + a ribonucleoside 5'-diphosphate. In terms of biological role, involved in mRNA degradation. Catalyzes the phosphorolysis of single-stranded polyribonucleotides processively in the 3'- to 5'-direction. This Rhizobium meliloti (strain 1021) (Ensifer meliloti) protein is Polyribonucleotide nucleotidyltransferase.